Consider the following 302-residue polypeptide: Acetylglutamate kinase (302 aa).

Residues 67 to 68 (GG), arginine 89, and asparagine 194 each bind substrate.

Belongs to the acetylglutamate kinase family. ArgB subfamily.

The protein resides in the cytoplasm. It catalyses the reaction N-acetyl-L-glutamate + ATP = N-acetyl-L-glutamyl 5-phosphate + ADP. The protein operates within amino-acid biosynthesis; L-arginine biosynthesis; N(2)-acetyl-L-ornithine from L-glutamate: step 2/4. In terms of biological role, catalyzes the ATP-dependent phosphorylation of N-acetyl-L-glutamate. This is Acetylglutamate kinase from Hahella chejuensis (strain KCTC 2396).